The primary structure comprises 405 residues: Adenylosuccinate synthetase (405 aa).

Residues 12–18 (GDEGKGK) and 40–42 (GHT) contribute to the GTP site. Aspartate 13 serves as the catalytic Proton acceptor. Aspartate 13 and glycine 40 together coordinate Mg(2+). IMP is bound by residues 13–16 (DEGK), 38–41 (NAGH), threonine 121, arginine 135, glutamine 213, threonine 228, and arginine 297. Histidine 41 (proton donor) is an active-site residue. Substrate is bound at residue 293–299 (TTTGRAR). GTP-binding positions include arginine 299, 325–327 (KMD), and 390–392 (SAG).

It belongs to the adenylosuccinate synthetase family. In terms of assembly, homodimer. The cofactor is Mg(2+).

The protein localises to the cytoplasm. It carries out the reaction IMP + L-aspartate + GTP = N(6)-(1,2-dicarboxyethyl)-AMP + GDP + phosphate + 2 H(+). The protein operates within purine metabolism; AMP biosynthesis via de novo pathway; AMP from IMP: step 1/2. Functionally, plays an important role in the de novo pathway of purine nucleotide biosynthesis. Catalyzes the first committed step in the biosynthesis of AMP from IMP. This is Adenylosuccinate synthetase from Deinococcus deserti (strain DSM 17065 / CIP 109153 / LMG 22923 / VCD115).